A 251-amino-acid polypeptide reads, in one-letter code: Triosephosphate isomerase (251 aa).

Substrate is bound at residue 9-11 (NWK). Residue H95 is the Electrophile of the active site. E167 functions as the Proton acceptor in the catalytic mechanism. Substrate contacts are provided by residues G173, S212, and 233 to 234 (GG).

It belongs to the triosephosphate isomerase family. In terms of assembly, homodimer.

The protein localises to the cytoplasm. It carries out the reaction D-glyceraldehyde 3-phosphate = dihydroxyacetone phosphate. It functions in the pathway carbohydrate biosynthesis; gluconeogenesis. It participates in carbohydrate degradation; glycolysis; D-glyceraldehyde 3-phosphate from glycerone phosphate: step 1/1. Functionally, involved in the gluconeogenesis. Catalyzes stereospecifically the conversion of dihydroxyacetone phosphate (DHAP) to D-glyceraldehyde-3-phosphate (G3P). The sequence is that of Triosephosphate isomerase from Pseudomonas putida (strain GB-1).